We begin with the raw amino-acid sequence, 102 residues long: uncharacterized protein (102 aa).

2 helical membrane passes run 33–55 (VLELLTIISGLVVTLVLVVLVVL) and 57–79 (VVGVVVLVVLLVVVVLLCDVVVA).

Its subcellular location is the membrane. This is an uncharacterized protein from Saccharomyces cerevisiae (strain ATCC 204508 / S288c) (Baker's yeast).